We begin with the raw amino-acid sequence, 679 residues long: Methionine--tRNA ligase (679 aa).

Residues 15–25 (PYANGSIHLGH) carry the 'HIGH' region motif. Zn(2+)-binding residues include Cys146, Cys149, Cys159, and Cys162. The short motif at 332–336 (KMSKS) is the 'KMSKS' region element. Residue Lys335 coordinates ATP. In terms of domain architecture, tRNA-binding spans 577–679 (DFAKVDMRVA…AGALPGMPVK (103 aa)).

Belongs to the class-I aminoacyl-tRNA synthetase family. MetG type 1 subfamily. As to quaternary structure, homodimer. Zn(2+) is required as a cofactor.

The protein localises to the cytoplasm. It carries out the reaction tRNA(Met) + L-methionine + ATP = L-methionyl-tRNA(Met) + AMP + diphosphate. Is required not only for elongation of protein synthesis but also for the initiation of all mRNA translation through initiator tRNA(fMet) aminoacylation. The sequence is that of Methionine--tRNA ligase from Sodalis glossinidius (strain morsitans).